The following is a 286-amino-acid chain: Haloalkane dehalogenase 2 (286 aa).

Positions 35–134 (PPILLCHGNP…RVRGVVLGNT (100 aa)) constitute an AB hydrolase-1 domain. Asp109 serves as the catalytic Nucleophile. The Proton donor role is filled by Asp238. The active-site Proton acceptor is the His267.

It belongs to the haloalkane dehalogenase family. Type 1 subfamily. In terms of assembly, monomer.

The catalysed reaction is 1-haloalkane + H2O = a halide anion + a primary alcohol + H(+). Its function is as follows. Catalyzes hydrolytic cleavage of carbon-halogen bonds in halogenated aliphatic compounds, leading to the formation of the corresponding primary alcohols, halide ions and protons. The polypeptide is Haloalkane dehalogenase 2 (dhmA2) (Mycobacterium bovis (strain ATCC BAA-935 / AF2122/97)).